The chain runs to 410 residues: Cysteine desulfurase IscS (410 aa).

Residues 80-81 (AT), asparagine 160, glutamine 188, and 208-210 (SGH) contribute to the pyridoxal 5'-phosphate site. An N6-(pyridoxal phosphate)lysine modification is found at lysine 211. Threonine 248 serves as a coordination point for pyridoxal 5'-phosphate. The active-site Cysteine persulfide intermediate is cysteine 334. Residue cysteine 334 coordinates [2Fe-2S] cluster.

Belongs to the class-V pyridoxal-phosphate-dependent aminotransferase family. NifS/IscS subfamily. In terms of assembly, homodimer. Forms a heterotetramer with IscU, interacts with other sulfur acceptors. It depends on pyridoxal 5'-phosphate as a cofactor.

The protein resides in the cytoplasm. The enzyme catalyses (sulfur carrier)-H + L-cysteine = (sulfur carrier)-SH + L-alanine. The protein operates within cofactor biosynthesis; iron-sulfur cluster biosynthesis. Master enzyme that delivers sulfur to a number of partners involved in Fe-S cluster assembly, tRNA modification or cofactor biosynthesis. Catalyzes the removal of elemental sulfur atoms from cysteine to produce alanine. Functions as a sulfur delivery protein for Fe-S cluster synthesis onto IscU, an Fe-S scaffold assembly protein, as well as other S acceptor proteins. This Rickettsia conorii (strain ATCC VR-613 / Malish 7) protein is Cysteine desulfurase IscS.